The primary structure comprises 203 residues: Peroxiredoxin (203 aa).

The Thioredoxin domain occupies 3–156 (VVLGQKAPDF…IIRVIKALQF (154 aa)). The active-site Cysteine sulfenic acid (-SOH) intermediate is the cysteine 44. Arginine 119 lines the substrate pocket.

It belongs to the peroxiredoxin family. Prx6 subfamily. Homodecamer. Pentamer of dimers that assemble into a ring structure.

The protein localises to the cytoplasm. It carries out the reaction a hydroperoxide + [thioredoxin]-dithiol = an alcohol + [thioredoxin]-disulfide + H2O. In terms of biological role, thiol-specific peroxidase that catalyzes the reduction of hydrogen peroxide and organic hydroperoxides to water and alcohols, respectively. Plays a role in cell protection against oxidative stress by detoxifying peroxides. The polypeptide is Peroxiredoxin (Thermoplasma volcanium (strain ATCC 51530 / DSM 4299 / JCM 9571 / NBRC 15438 / GSS1)).